The chain runs to 257 residues: Nickel import system ATP-binding protein NikD (257 aa).

Residues 4–245 form the ABC transporter domain; that stretch reads IDIQNLTIKN…HLHPYTERLI (242 aa). 37–44 serves as a coordination point for ATP; it reads GESGAGKS.

It belongs to the ABC transporter superfamily. The complex is composed of two ATP-binding proteins (NikD and NikE), two transmembrane proteins (NikB and NikC) and a solute-binding protein (NikA).

The protein resides in the cell membrane. The catalysed reaction is Ni(2+)(out) + ATP + H2O = Ni(2+)(in) + ADP + phosphate + H(+). In terms of biological role, part of the ABC transporter complex NikABCDE (Opp2) involved in nickel import. Probably responsible for energy coupling to the transport system. This is Nickel import system ATP-binding protein NikD from Staphylococcus aureus (strain MW2).